A 215-amino-acid chain; its full sequence is UPF0056 membrane protein bbp_248 (215 aa).

6 consecutive transmembrane segments (helical) span residues 10-32, 52-74, 78-100, 119-141, 151-169, and 190-207; these read IYIS…PIFT, FSVA…LFGI, SFRI…GNFI, ISIV…TIVW, IFGC…WTLF, and IMGL…LAGL.

This sequence belongs to the UPF0056 (MarC) family.

It is found in the cell membrane. This chain is UPF0056 membrane protein bbp_248, found in Buchnera aphidicola subsp. Baizongia pistaciae (strain Bp).